Here is a 144-residue protein sequence, read N- to C-terminus: Putative pre-16S rRNA nuclease (144 aa).

The protein belongs to the YqgF nuclease family.

The protein resides in the cytoplasm. In terms of biological role, could be a nuclease involved in processing of the 5'-end of pre-16S rRNA. This is Putative pre-16S rRNA nuclease from Wigglesworthia glossinidia brevipalpis.